A 92-amino-acid polypeptide reads, in one-letter code: Protein S100-A5 (92 aa).

2 EF-hand domains span residues Met-12–Met-47 and Met-47–Ala-82. Ca(2+)-binding residues include Thr-28, Glu-33, Asp-60, Asn-62, Asp-64, Glu-66, and Glu-71.

Belongs to the S-100 family. Homodimer.

Its function is as follows. Binds calcium, zinc and copper. One subunit can simultaneously bind 2 calcium ions or 2 copper ions plus 1 zinc ion. Calcium and copper ions compete for the same binding sites. The sequence is that of Protein S100-A5 (S100A5) from Homo sapiens (Human).